Reading from the N-terminus, the 459-residue chain is Ribulose bisphosphate carboxylase large chain (459 aa).

Lysine 4 carries the N6,N6,N6-trimethyllysine modification. Substrate is bound by residues asparagine 113 and threonine 163. The active-site Proton acceptor is the lysine 165. Residue lysine 167 coordinates substrate. Mg(2+) is bound by residues lysine 191, aspartate 193, and glutamate 194. Lysine 191 is subject to N6-carboxylysine. Histidine 284 serves as the catalytic Proton acceptor. Substrate-binding residues include arginine 285, histidine 317, and serine 369.

The protein belongs to the RuBisCO large chain family. Type I subfamily. As to quaternary structure, heterohexadecamer of 8 large chains and 8 small chains; disulfide-linked. The disulfide link is formed within the large subunit homodimers. Requires Mg(2+) as cofactor. The disulfide bond which can form in the large chain dimeric partners within the hexadecamer appears to be associated with oxidative stress and protein turnover.

It localises to the plastid. The protein resides in the chloroplast. The enzyme catalyses 2 (2R)-3-phosphoglycerate + 2 H(+) = D-ribulose 1,5-bisphosphate + CO2 + H2O. The catalysed reaction is D-ribulose 1,5-bisphosphate + O2 = 2-phosphoglycolate + (2R)-3-phosphoglycerate + 2 H(+). In terms of biological role, ruBisCO catalyzes two reactions: the carboxylation of D-ribulose 1,5-bisphosphate, the primary event in carbon dioxide fixation, as well as the oxidative fragmentation of the pentose substrate in the photorespiration process. Both reactions occur simultaneously and in competition at the same active site. The protein is Ribulose bisphosphate carboxylase large chain of Garrya elliptica (Wavyleaf silktassel).